The following is a 770-amino-acid chain: Coiled-coil alpha-helical rod protein 1 (770 aa).

Coiled-coil stretches lie at residues 56–289, 334–420, and 476–669; these read STVT…DLQA, LRNW…RQEQ, and GLMA…RKEE. 4 disordered regions span residues 573-592, 641-672, 700-721, and 744-770; these read LEAARRGQQESTEEAASLRQ, LRQIQHKATQEKERNQELRRLQDEARKEEGQR, NKKCSPRSVESSSSESPAAASC, and SRDEDICVEDNQNTKKTKNPPSDPLLS. Residues 648-672 show a composition bias toward basic and acidic residues; the sequence is ATQEKERNQELRRLQDEARKEEGQR. Residues 701–721 show a composition bias toward low complexity; the sequence is KKCSPRSVESSSSESPAAASC.

Its subcellular location is the cytoplasm. The protein resides in the nucleus. Functionally, may be a regulator of keratinocyte proliferation or differentiation. This Mus musculus (Mouse) protein is Coiled-coil alpha-helical rod protein 1 (Cchcr1).